Here is a 143-residue protein sequence, read N- to C-terminus: EKC/KEOPS complex subunit LAGE3 (143 aa).

Positions 1-57 are disordered; it reads MRDADADAGGGADGGDGRGGHSCRGGVDTAAAPAGGAPPAHAPGPGRDAASAARGSR. Low complexity predominate over residues 30–55; that stretch reads AAAPAGGAPPAHAPGPGRDAASAARG.

The protein belongs to the CTAG/PCC1 family. As to quaternary structure, component of the EKC/KEOPS complex composed of at least GON7, TP53RK, TPRKB, OSGEP and LAGE3; the whole complex dimerizes. In terms of tissue distribution, ubiquitous.

Its subcellular location is the cytoplasm. The protein localises to the nucleus. Component of the EKC/KEOPS complex that is required for the formation of a threonylcarbamoyl group on adenosine at position 37 (t(6)A37) in tRNAs that read codons beginning with adenine. The complex is probably involved in the transfer of the threonylcarbamoyl moiety of threonylcarbamoyl-AMP (TC-AMP) to the N6 group of A37. LAGE3 functions as a dimerization module for the complex. This is EKC/KEOPS complex subunit LAGE3 from Homo sapiens (Human).